A 345-amino-acid polypeptide reads, in one-letter code: uncharacterized protein (345 aa).

Residues 1-13 show a composition bias toward polar residues; that stretch reads MSKPNTETISVNI. Residues 1–23 form a disordered region; it reads MSKPNTETISVNIPESEGVPLPD. The stretch at 283–316 forms a coiled coil; the sequence is SLKQRTNILKKQGETLKKNVEDINKDTSNLKRHA.

It is found in the virion. This is an uncharacterized protein from Acanthamoeba polyphaga mimivirus (APMV).